Here is a 396-residue protein sequence, read N- to C-terminus: S-adenosylmethionine synthase (396 aa).

H16 contributes to the ATP binding site. D18 is a binding site for Mg(2+). E44 contributes to the K(+) binding site. L-methionine contacts are provided by E57 and Q100. The flexible loop stretch occupies residues 100 to 110 (QSPDIAQGVNE). ATP contacts are provided by residues 175–177 (DAK), 242–243 (RF), D251, 257–258 (RK), A274, and K278. D251 lines the L-methionine pocket. K282 is a binding site for L-methionine.

The protein belongs to the AdoMet synthase family. In terms of assembly, homotetramer; dimer of dimers. Requires Mg(2+) as cofactor. K(+) serves as cofactor.

The protein resides in the cytoplasm. The enzyme catalyses L-methionine + ATP + H2O = S-adenosyl-L-methionine + phosphate + diphosphate. The protein operates within amino-acid biosynthesis; S-adenosyl-L-methionine biosynthesis; S-adenosyl-L-methionine from L-methionine: step 1/1. In terms of biological role, catalyzes the formation of S-adenosylmethionine (AdoMet) from methionine and ATP. The overall synthetic reaction is composed of two sequential steps, AdoMet formation and the subsequent tripolyphosphate hydrolysis which occurs prior to release of AdoMet from the enzyme. This is S-adenosylmethionine synthase from Streptococcus suis (strain 05ZYH33).